We begin with the raw amino-acid sequence, 257 residues long: Phosphatidylglycerol--prolipoprotein diacylglyceryl transferase (257 aa).

Helical transmembrane passes span 13 to 33 (IGPIDVHWYGIFMAISIAIGG), 49 to 69 (FLLNLLMIVVISGVVGARLMF), 88 to 108 (IYEGGLSWHGAVLGGFLAGLY), 123 to 143 (FAVLGLSIGNILVRIGNIFNQ), 152 to 172 (FAFGRWPAQLVGVAMGIILLI), 185 to 202 (GYQFWSFIFYYQLMRGLI), and 223 to 243 (IGFFTLTQLVTPFILILAYWM). R136 is an a 1,2-diacyl-sn-glycero-3-phospho-(1'-sn-glycerol) binding site.

It belongs to the Lgt family.

The protein localises to the cell membrane. The enzyme catalyses L-cysteinyl-[prolipoprotein] + a 1,2-diacyl-sn-glycero-3-phospho-(1'-sn-glycerol) = an S-1,2-diacyl-sn-glyceryl-L-cysteinyl-[prolipoprotein] + sn-glycerol 1-phosphate + H(+). It participates in protein modification; lipoprotein biosynthesis (diacylglyceryl transfer). Its function is as follows. Catalyzes the transfer of the diacylglyceryl group from phosphatidylglycerol to the sulfhydryl group of the N-terminal cysteine of a prolipoprotein, the first step in the formation of mature lipoproteins. The polypeptide is Phosphatidylglycerol--prolipoprotein diacylglyceryl transferase (Thermoanaerobacter pseudethanolicus (strain ATCC 33223 / 39E) (Clostridium thermohydrosulfuricum)).